The primary structure comprises 511 residues: Ent-copalyl diphosphate synthase (511 aa).

Asp291 and Asp293 together coordinate a divalent metal cation. The DXDD motif signature appears at Asp291–Asp294.

It belongs to the terpene synthase family. In terms of assembly, homodimer. It depends on a divalent metal cation as a cofactor.

It catalyses the reaction (2E,6E,10E)-geranylgeranyl diphosphate = ent-copalyl diphosphate. It participates in antibiotic biosynthesis. Involved in viguiepinol biosynthesis. Catalyzes the conversion of geranylgeranyl diphosphate (GGDP) into copalyl diphosphate (ent-CDP). This Streptomyces sp. (strain KO-3988) protein is Ent-copalyl diphosphate synthase.